A 467-amino-acid polypeptide reads, in one-letter code: Asparagine--tRNA ligase (467 aa).

Belongs to the class-II aminoacyl-tRNA synthetase family. In terms of assembly, homodimer.

It is found in the cytoplasm. It catalyses the reaction tRNA(Asn) + L-asparagine + ATP = L-asparaginyl-tRNA(Asn) + AMP + diphosphate + H(+). This Haemophilus influenzae (strain PittGG) protein is Asparagine--tRNA ligase.